Here is a 60-residue protein sequence, read N- to C-terminus: Protein translocase subunit SecE (60 aa).

A helical transmembrane segment spans residues 31–51 (VIVVSTVIFFLVFFYALDLGI).

This sequence belongs to the SecE/SEC61-gamma family. As to quaternary structure, component of the Sec protein translocase complex. Heterotrimer consisting of SecY, SecE and SecG subunits. The heterotrimers can form oligomers, although 1 heterotrimer is thought to be able to translocate proteins. Interacts with the ribosome. Interacts with SecDF, and other proteins may be involved. Interacts with SecA.

The protein localises to the cell membrane. Essential subunit of the Sec protein translocation channel SecYEG. Clamps together the 2 halves of SecY. May contact the channel plug during translocation. This is Protein translocase subunit SecE from Staphylococcus aureus (strain Mu50 / ATCC 700699).